The chain runs to 509 residues: Maturase K (509 aa).

The protein belongs to the intron maturase 2 family. MatK subfamily.

It localises to the plastid. It is found in the chloroplast. Functionally, usually encoded in the trnK tRNA gene intron. Probably assists in splicing its own and other chloroplast group II introns. The chain is Maturase K from Trifolium semipilosum (Kenya clover).